Consider the following 438-residue polypeptide: Choline monooxygenase, chloroplastic (438 aa).

Residues 1-58 (MAASATTMLLKYPTTVCGIPNSSANNSTDPSNNIVQIPQTTTTNSPLLKFRTPNKPVN) constitute a chloroplast transit peptide. Positions 121 to 228 (WQVAGYSDQV…VAVWGPFILI (108 aa)) constitute a Rieske domain. The [2Fe-2S] cluster site is built by C163, H165, C182, and H185. The Fe cation site is built by H288 and H293.

Belongs to the choline monooxygenase family. [2Fe-2S] cluster is required as a cofactor. Fe cation serves as cofactor. The cofactor is Mg(2+). Expressed in roots and leaves.

Its subcellular location is the plastid. The protein localises to the chloroplast stroma. The catalysed reaction is choline + 2 reduced [2Fe-2S]-[ferredoxin] + O2 + 2 H(+) = betaine aldehyde hydrate + 2 oxidized [2Fe-2S]-[ferredoxin] + H2O. It participates in amine and polyamine biosynthesis; betaine biosynthesis via choline pathway; betaine aldehyde from choline (monooxygenase route): step 1/1. Its function is as follows. Catalyzes the first step of the osmoprotectant glycine betaine synthesis. The polypeptide is Choline monooxygenase, chloroplastic (CMO) (Atriplex hortensis (Mountain spinach)).